The following is a 235-amino-acid chain: Attacin-E (235 aa).

The signal sequence occupies residues 1–19; the sequence is MFGKIVFLLLVALCAGVQS. The propeptide occupies 20 to 47; it reads RYLIVSEPVYYIEHYEEPELLASSRVRR.

The protein belongs to the attacin/sarcotoxin-2 family. Post-translationally, attacin F appears to be derived by proteolytic digestion of attacin E.

The protein resides in the secreted. Its function is as follows. Hemolymph antibacterial protein. The chain is Attacin-E from Hyalophora cecropia (Cecropia moth).